The primary structure comprises 335 residues: Phosphate acyltransferase (335 aa).

Belongs to the PlsX family. Homodimer. Probably interacts with PlsY.

It is found in the cytoplasm. It carries out the reaction a fatty acyl-[ACP] + phosphate = an acyl phosphate + holo-[ACP]. The protein operates within lipid metabolism; phospholipid metabolism. Catalyzes the reversible formation of acyl-phosphate (acyl-PO(4)) from acyl-[acyl-carrier-protein] (acyl-ACP). This enzyme utilizes acyl-ACP as fatty acyl donor, but not acyl-CoA. This is Phosphate acyltransferase from Desulfitobacterium hafniense (strain Y51).